The chain runs to 107 residues: Sperm protamine P1 (107 aa).

Basic and acidic residues-rich tracts occupy residues 1 to 10 and 20 to 33; these read ALRKVDRNRF and REAK…EFPG. Residues 1 to 35 constitute a propeptide, removed in mature form; sequence ALRKVDRNRFVLDNVTPQPREAKRYKEEEEFPGHG. The disordered stretch occupies residues 1 to 107; that stretch reads ALRKVDRNRF…RRRRRGKKGK (107 aa). Positions 34-107 are enriched in basic residues; that stretch reads HGRRRRRRSK…RRRRRGKKGK (74 aa). S42 is modified (phosphoserine).

Post-translationally, a series of N-terminal cleavages yield the mature protein. Only the mature protein is phosphorylated. Gonads.

It is found in the nucleus. The protein localises to the chromosome. In terms of biological role, protamines substitute for histones in the chromatin of sperm during the haploid phase of spermatogenesis. They compact sperm DNA into a highly condensed, stable and inactive complex. In Bolinus brandaris (Purple dye murex), this protein is Sperm protamine P1.